We begin with the raw amino-acid sequence, 79 residues long: UPF0154 protein Lm4b_01315 (79 aa).

A helical membrane pass occupies residues 2–22 (WIYILVGIICLLAGLAGGFFI). Polar residues predominate over residues 57–66 (KINQMMSAMN). Positions 57-79 (KINQMMSAMNKQQEKEKPKKTKK) are disordered.

This sequence belongs to the UPF0154 family.

The protein localises to the cell membrane. This Listeria monocytogenes serotype 4b (strain CLIP80459) protein is UPF0154 protein Lm4b_01315.